We begin with the raw amino-acid sequence, 437 residues long: Purple acid phosphatase 18 (437 aa).

The N-terminal stretch at Met1–Ala23 is a signal peptide. The Fe cation site is built by Asp148, Asp175, and Tyr178. Asp175 provides a ligand contact to Zn(2+). Zn(2+) contacts are provided by Asn208 and His291. Asn208 is a binding site for substrate. His301 (proton donor) is an active-site residue. His328 serves as a coordination point for Zn(2+). Position 328 to 330 (His328 to His330) interacts with substrate. His330 provides a ligand contact to Fe cation. A glycan (N-linked (GlcNAc...) asparagine) is linked at Asn390.

Belongs to the metallophosphoesterase superfamily. Purple acid phosphatase family. As to quaternary structure, homodimer. Fe cation is required as a cofactor. Requires Zn(2+) as cofactor. Expressed in roots, stems, leaves, flowers and siliques.

It localises to the secreted. The catalysed reaction is a phosphate monoester + H2O = an alcohol + phosphate. The sequence is that of Purple acid phosphatase 18 (PAP18) from Arabidopsis thaliana (Mouse-ear cress).